Consider the following 312-residue polypeptide: Malate dehydrogenase (312 aa).

NAD(+)-binding positions include 7–13 (GAAGGIG) and aspartate 34. Residues arginine 81 and arginine 87 each contribute to the substrate site. NAD(+) is bound by residues asparagine 94 and 117–119 (ITN). Asparagine 119 and arginine 153 together coordinate substrate. The active-site Proton acceptor is the histidine 177. Methionine 227 is an NAD(+) binding site.

This sequence belongs to the LDH/MDH superfamily. MDH type 1 family. In terms of assembly, homodimer.

It carries out the reaction (S)-malate + NAD(+) = oxaloacetate + NADH + H(+). In terms of biological role, catalyzes the reversible oxidation of malate to oxaloacetate. This is Malate dehydrogenase from Salmonella dublin (strain CT_02021853).